A 601-amino-acid chain; its full sequence is Elongation factor 4 (601 aa).

The 184-residue stretch at 5 to 188 folds into the tr-type G domain; the sequence is SHIRNFAIIA…ALVLRLPPPT (184 aa). GTP-binding positions include 17–22 and 135–138; these read DHGKST and NKID.

The protein belongs to the TRAFAC class translation factor GTPase superfamily. Classic translation factor GTPase family. LepA subfamily.

The protein localises to the cell inner membrane. The catalysed reaction is GTP + H2O = GDP + phosphate + H(+). Its function is as follows. Required for accurate and efficient protein synthesis under certain stress conditions. May act as a fidelity factor of the translation reaction, by catalyzing a one-codon backward translocation of tRNAs on improperly translocated ribosomes. Back-translocation proceeds from a post-translocation (POST) complex to a pre-translocation (PRE) complex, thus giving elongation factor G a second chance to translocate the tRNAs correctly. Binds to ribosomes in a GTP-dependent manner. The protein is Elongation factor 4 of Rhodospirillum rubrum (strain ATCC 11170 / ATH 1.1.1 / DSM 467 / LMG 4362 / NCIMB 8255 / S1).